We begin with the raw amino-acid sequence, 566 residues long: Arginine--tRNA ligase (566 aa).

Residues 121–131 (ANPNGPFHIGH) carry the 'HIGH' region motif.

This sequence belongs to the class-I aminoacyl-tRNA synthetase family.

The protein resides in the cytoplasm. It catalyses the reaction tRNA(Arg) + L-arginine + ATP = L-arginyl-tRNA(Arg) + AMP + diphosphate. The protein is Arginine--tRNA ligase of Methanococcus maripaludis (strain C5 / ATCC BAA-1333).